Reading from the N-terminus, the 381-residue chain is Pulmonary surfactant-associated protein B (381 aa).

Residues 1 to 24 (MAESHLLQWLLLLLPTLCGPGTAA) form the signal peptide. One can recognise a Saposin A-type domain in the interval 25 to 65 (WTTSSLACAQGPEFWCQSLEQALQCRALGHCLQEVWGHVGA). Positions 25-200 (WTTSSLACAQ…PHTQDLSEQQ (176 aa)) are excised as a propeptide. Saposin B-type domains are found at residues 65–147 (ADDL…KSRQ), 204–281 (PLPY…SMDD), and 295–370 (RDSE…GTMS). Disulfide bonds link cysteine 69–cysteine 143, cysteine 72–cysteine 137, cysteine 100–cysteine 112, cysteine 208–cysteine 277, cysteine 211–cysteine 271, cysteine 235–cysteine 246, cysteine 299–cysteine 366, cysteine 302–cysteine 360, and cysteine 325–cysteine 335. Residue asparagine 129 is glycosylated (N-linked (GlcNAc...) asparagine). Residues 280-381 (DDSAGPRSPT…PLQCIHSPDL (102 aa)) constitute a propeptide that is removed on maturation. Asparagine 311 is a glycosylation site (N-linked (GlcNAc...) asparagine).

Homodimer; disulfide-linked.

Its subcellular location is the secreted. It localises to the extracellular space. The protein resides in the surface film. Functionally, pulmonary surfactant-associated proteins promote alveolar stability by lowering the surface tension at the air-liquid interface in the peripheral air spaces. SP-B increases the collapse pressure of palmitic acid to nearly 70 millinewtons per meter. This Homo sapiens (Human) protein is Pulmonary surfactant-associated protein B (SFTPB).